A 249-amino-acid chain; its full sequence is Adapter protein MecA (249 aa).

The protein belongs to the MecA family. Homodimer.

Its function is as follows. Enables the recognition and targeting of unfolded and aggregated proteins to the ClpC protease or to other proteins involved in proteolysis. The protein is Adapter protein MecA of Streptococcus thermophilus (strain ATCC BAA-250 / LMG 18311).